We begin with the raw amino-acid sequence, 244 residues long: ATP synthase subunit a (244 aa).

6 consecutive transmembrane segments (helical) span residues 25–45 (ISFT…LLIF), 85–105 (YFAF…FGMI), 115–135 (IIVT…IGFM), 144–164 (LFVP…IEII), 193–213 (GFVI…SVAL), and 216–236 (LEIL…CIYL).

It belongs to the ATPase A chain family. In terms of assembly, F-type ATPases have 2 components, CF(1) - the catalytic core - and CF(0) - the membrane proton channel. CF(1) has five subunits: alpha(3), beta(3), gamma(1), delta(1), epsilon(1). CF(0) has three main subunits: a(1), b(2) and c(9-12). The alpha and beta chains form an alternating ring which encloses part of the gamma chain. CF(1) is attached to CF(0) by a central stalk formed by the gamma and epsilon chains, while a peripheral stalk is formed by the delta and b chains.

It is found in the cell inner membrane. Its function is as follows. Key component of the proton channel; it plays a direct role in the translocation of protons across the membrane. This chain is ATP synthase subunit a, found in Pelagibacter ubique (strain HTCC1062).